Reading from the N-terminus, the 273-residue chain is Large ribosomal subunit protein uL2 (273 aa).

Disordered stretches follow at residues 28 to 55 (TPEK…RHRG) and 222 to 273 (GMAM…SKRK). Residues 255–273 (YKTRKKRRVSDRFIVSKRK) show a composition bias toward basic residues.

It belongs to the universal ribosomal protein uL2 family. Part of the 50S ribosomal subunit. Forms a bridge to the 30S subunit in the 70S ribosome.

Functionally, one of the primary rRNA binding proteins. Required for association of the 30S and 50S subunits to form the 70S ribosome, for tRNA binding and peptide bond formation. It has been suggested to have peptidyltransferase activity; this is somewhat controversial. Makes several contacts with the 16S rRNA in the 70S ribosome. The sequence is that of Large ribosomal subunit protein uL2 from Treponema pallidum (strain Nichols).